Consider the following 315-residue polypeptide: Olfactory receptor 2V1 (315 aa).

The Extracellular portion of the chain corresponds to 1-31 (MGRWVNQSYTDGFFLLGIFSHSQTDLVLFSA). Asn6 carries N-linked (GlcNAc...) asparagine glycosylation. Residues 32 to 52 (VMVVFTVALCGNVLLIFLIYL) traverse the membrane as a helical segment. Residues 53–58 (DAGLHT) lie on the Cytoplasmic side of the membrane. The helical transmembrane segment at 59–79 (PMYFFLSQLSLMDLMLVCNIV) threads the bilayer. The Extracellular portion of the chain corresponds to 80–99 (PKMAANFLSGRKSISFVGCG). A disulfide bridge connects residues Cys98 and Cys180. Residues 100–120 (IQIGFFVSLVGSEGLLLGLMA) form a helical membrane-spanning segment. Topologically, residues 121–149 (YDRYVAVSHPLHYPILMNQRVCLQITGSS) are cytoplasmic. Residues 150–170 (WAFGIIDGVIQMVAAMGLPYC) form a helical membrane-spanning segment. The Extracellular portion of the chain corresponds to 171–198 (GSRSVDHFFCEVQALLKLACADTSLFDT). A helical membrane pass occupies residues 199–219 (LLFACCVFMLLLPFSIIMASY). At 220–238 (ACILGAVLRIRSAQAWKKA) the chain is on the cytoplasmic side. A helical membrane pass occupies residues 239–259 (LATCSSHLTAVTLFYGAAMFM). The Extracellular segment spans residues 260–272 (YLRPRRYRAPSHD). The chain crosses the membrane as a helical span at residues 273 to 293 (KVASIFYTVLTPMLNPLIYSL). At 294-315 (RNGEVMGALRKGLDRCRIGSQH) the chain is on the cytoplasmic side.

It belongs to the G-protein coupled receptor 1 family.

The protein resides in the cell membrane. In terms of biological role, odorant receptor. This Homo sapiens (Human) protein is Olfactory receptor 2V1 (OR2V1).